Here is a 177-residue protein sequence, read N- to C-terminus: Deoxyuridine 5'-triphosphate nucleotidohydrolase (177 aa).

Substrate contacts are provided by residues 83–85 (RSG), asparagine 96, 100–102 (TID), and lysine 110. Over residues 150 to 163 (DLTSSQTDLSNQPN) the composition is skewed to polar residues. Positions 150–177 (DLTSSQTDLSNQPNTGRGTGGFGSTGQK) are disordered. The segment covering 166-177 (RGTGGFGSTGQK) has biased composition (gly residues).

This sequence belongs to the dUTPase family. Mg(2+) serves as cofactor.

It catalyses the reaction dUTP + H2O = dUMP + diphosphate + H(+). It functions in the pathway pyrimidine metabolism; dUMP biosynthesis; dUMP from dCTP (dUTP route): step 2/2. This enzyme is involved in nucleotide metabolism: it produces dUMP, the immediate precursor of thymidine nucleotides and it decreases the intracellular concentration of dUTP so that uracil cannot be incorporated into DNA. This Bartonella bacilliformis (strain ATCC 35685 / KC583 / Herrer 020/F12,63) protein is Deoxyuridine 5'-triphosphate nucleotidohydrolase.